The following is a 343-amino-acid chain: Mas-related G-protein coupled receptor member F (343 aa).

At M1 to P44 the chain is on the extracellular side. A glycan (N-linked (GlcNAc...) asparagine) is linked at N4. Residues A45–L66 form a helical membrane-spanning segment. At W67–F82 the chain is on the cytoplasmic side. The chain crosses the membrane as a helical span at residues L83–T104. Topologically, residues G105 to G123 are extracellular. A helical transmembrane segment spans residues L124 to S144. Residues V145 to S160 are Cytoplasmic-facing. Residues A161 to F181 traverse the membrane as a helical segment. Topologically, residues C182–D198 are extracellular. Residues I199–L220 traverse the membrane as a helical segment. Residues I221–I241 lie on the Cytoplasmic side of the membrane. The chain crosses the membrane as a helical span at residues L242–W263. At V264–E273 the chain is on the extracellular side. The chain crosses the membrane as a helical span at residues Y274–A294. Over G295 to S343 the chain is Cytoplasmic. Positions L320–S343 are disordered.

The protein belongs to the G-protein coupled receptor 1 family. Mas subfamily.

It localises to the cell membrane. In terms of biological role, orphan receptor. May bind to a neuropeptide and may regulate nociceptor function and/or development, including the sensation or modulation of pain. The sequence is that of Mas-related G-protein coupled receptor member F (MRGPRF) from Homo sapiens (Human).